Reading from the N-terminus, the 241-residue chain is MTGKPLVAILSGAGVSTDSGIPDYRGPNGLWRRDPEAEKLVTYEYYMGDPEIRRRSWLMRRDSAALHAEPNAAHRAVADLERRGVPVRVLTQNVDGLHQLAGVSARKVLELHGTARDCVCTGCGARGPMADVLARIEAGEDDPPCLDCGGVLKTATVMFGERLDPVVLGEAAAISKACQVFVAVGTSLQVEPAAGLARVAVEHGARLVVVNAEPTPYDELADEVIREPIGSALPALLRGLG.

One can recognise a Deacetylase sirtuin-type domain in the interval 1–241 (MTGKPLVAIL…ALPALLRGLG (241 aa)). Residues A13, T17, R25, Q92, V94, D95, and H112 each contribute to the NAD(+) site. 2 residues coordinate nicotinamide: V94 and D95. H112 (proton acceptor) is an active-site residue. Zn(2+) is bound by residues C120, C123, C145, and C148. NAD(+) is bound by residues T186, S187, N211, and I229.

The protein belongs to the sirtuin family. Class U subfamily. Zn(2+) is required as a cofactor.

The protein resides in the cytoplasm. It catalyses the reaction N(6)-acetyl-L-lysyl-[protein] + NAD(+) + H2O = 2''-O-acetyl-ADP-D-ribose + nicotinamide + L-lysyl-[protein]. Functionally, NAD-dependent protein deacetylase which modulates the activities of several enzymes which are inactive in their acetylated form. In Streptomyces coelicolor (strain ATCC BAA-471 / A3(2) / M145), this protein is NAD-dependent protein deacetylase 2.